The chain runs to 87 residues: Small ribosomal subunit protein bS18 (87 aa).

This sequence belongs to the bacterial ribosomal protein bS18 family. As to quaternary structure, part of the 30S ribosomal subunit. Forms a tight heterodimer with protein bS6.

Binds as a heterodimer with protein bS6 to the central domain of the 16S rRNA, where it helps stabilize the platform of the 30S subunit. The polypeptide is Small ribosomal subunit protein bS18 (Sulfurovum sp. (strain NBC37-1)).